The chain runs to 148 residues: uncharacterized protein (148 aa).

Over residues 1–17 (MCPPVRQRPAQAPPAKR) the composition is skewed to low complexity. Disordered stretches follow at residues 1–86 (MCPP…VQSP) and 122–148 (RAHR…TSPC). Basic residues predominate over residues 38 to 57 (RPPKMQRRPRPPVAKRRRFP). Over residues 137–148 (QRPSPDSQTSPC) the composition is skewed to polar residues.

The protein belongs to the Epstein-Barr virus BLLF2 family.

This is an uncharacterized protein from Epstein-Barr virus (strain AG876) (HHV-4).